Consider the following 172-residue polypeptide: Auxin-responsive protein IAA30 (172 aa).

The segment covering 1-18 (MGRGRSSSSSSIESSCKS) has biased composition (low complexity). A disordered region spans residues 1–28 (MGRGRSSSSSSIESSCKSNPFGVSSSNT). The EAR-like (transcriptional repression) motif lies at 35 to 39 (LRLGL). A PB1 domain is found at 82 to 171 (SFYVKVNMEG…RRLKISRAYH (90 aa)).

It belongs to the Aux/IAA family. Homodimers and heterodimers.

It localises to the nucleus. Aux/IAA proteins are short-lived transcriptional factors that function as repressors of early auxin response genes at low auxin concentrations. Repression is thought to result from the interaction with auxin response factors (ARFs), proteins that bind to the auxin-responsive promoter element (AuxRE). Formation of heterodimers with ARF proteins may alter their ability to modulate early auxin response genes expression. This Arabidopsis thaliana (Mouse-ear cress) protein is Auxin-responsive protein IAA30 (IAA30).